Consider the following 285-residue polypeptide: Nucleotide-binding protein Cphy_0331 (285 aa).

8–15 contacts ATP; the sequence is GMSGAGKS. 59–62 serves as a coordination point for GTP; the sequence is DIRS.

This sequence belongs to the RapZ-like family.

Functionally, displays ATPase and GTPase activities. The polypeptide is Nucleotide-binding protein Cphy_0331 (Lachnoclostridium phytofermentans (strain ATCC 700394 / DSM 18823 / ISDg) (Clostridium phytofermentans)).